Here is a 364-residue protein sequence, read N- to C-terminus: Abhydrolase domain-containing protein C57A10.08c (364 aa).

The Cytoplasmic segment spans residues 1-8 (MYFFTISR). The chain crosses the membrane as a helical; Signal-anchor for type II membrane protein span at residues 9-29 (LTSFISYGILGALGILTFLYL). Topologically, residues 30-364 (YDAYLAKSFQ…DKFSTTDHNI (335 aa)) are lumenal. Ser-183 functions as the Charge relay system in the catalytic mechanism. Asn-326 carries an N-linked (GlcNAc...) asparagine glycan. His-336 functions as the Charge relay system in the catalytic mechanism.

The protein belongs to the AB hydrolase superfamily.

It localises to the endoplasmic reticulum membrane. This Schizosaccharomyces pombe (strain 972 / ATCC 24843) (Fission yeast) protein is Abhydrolase domain-containing protein C57A10.08c.